The following is a 209-amino-acid chain: Redox-sensing transcriptional repressor Rex (209 aa).

A DNA-binding region (H-T-H motif) is located at residues 16 to 55; that stretch reads LYYRFIQNLSLSGKQRVSSAELSEAVKVDSATIRRDFSYF. Position 90-95 (90-95) interacts with NAD(+); sequence GVGNLG.

It belongs to the transcriptional regulatory Rex family. As to quaternary structure, homodimer.

It localises to the cytoplasm. Modulates transcription in response to changes in cellular NADH/NAD(+) redox state. The chain is Redox-sensing transcriptional repressor Rex from Bacillus cytotoxicus (strain DSM 22905 / CIP 110041 / 391-98 / NVH 391-98).